The sequence spans 358 residues: Aminomethyltransferase (358 aa).

This sequence belongs to the GcvT family. In terms of assembly, the glycine cleavage system is composed of four proteins: P, T, L and H.

It carries out the reaction N(6)-[(R)-S(8)-aminomethyldihydrolipoyl]-L-lysyl-[protein] + (6S)-5,6,7,8-tetrahydrofolate = N(6)-[(R)-dihydrolipoyl]-L-lysyl-[protein] + (6R)-5,10-methylene-5,6,7,8-tetrahydrofolate + NH4(+). Its function is as follows. The glycine cleavage system catalyzes the degradation of glycine. The polypeptide is Aminomethyltransferase (Francisella tularensis subsp. mediasiatica (strain FSC147)).